The sequence spans 130 residues: MIQQETLLQVADNSGIKKVMCIKVLGGSKKRYASVGDEIIVAVKDAQPAFGLKDSTGKKVHNKAVQRAVVVRTTKEIRRPDGSYIRFDDNACAIIDDKGNPKGTRIFGPVARELRDKKYAKIISLAPEVL.

It belongs to the universal ribosomal protein uL14 family. As to quaternary structure, part of the 50S ribosomal subunit. Forms a cluster with proteins L3 and L19. In the 70S ribosome, L14 and L19 interact and together make contacts with the 16S rRNA in bridges B5 and B8.

In terms of biological role, binds to 23S rRNA. Forms part of two intersubunit bridges in the 70S ribosome. This chain is Large ribosomal subunit protein uL14, found in Leptospira interrogans serogroup Icterohaemorrhagiae serovar copenhageni (strain Fiocruz L1-130).